Consider the following 258-residue polypeptide: Phosphosulfolactate synthase (258 aa).

This sequence belongs to the phosphosulfolactate synthase family.

It catalyses the reaction (2R)-O-phospho-3-sulfolactate = phosphoenolpyruvate + sulfite + H(+). Its pathway is cofactor biosynthesis; coenzyme M biosynthesis; sulfoacetaldehyde from phosphoenolpyruvate and sulfite: step 1/4. Its function is as follows. Catalyzes the addition of sulfite to phosphoenolpyruvate (PEP) to yield (2R)-phospho-3-sulfolactate (PSL). The chain is Phosphosulfolactate synthase (comA) from Methanothermobacter thermautotrophicus (strain ATCC 29096 / DSM 1053 / JCM 10044 / NBRC 100330 / Delta H) (Methanobacterium thermoautotrophicum).